The chain runs to 159 residues: 2-C-methyl-D-erythritol 2,4-cyclodiphosphate synthase (159 aa).

Aspartate 10 and histidine 12 together coordinate a divalent metal cation. Residues 10-12 and 36-37 each bind 4-CDP-2-C-methyl-D-erythritol 2-phosphate; these read DVH and HS. Histidine 44 is an a divalent metal cation binding site. Residues 58-60, 63-67, 102-108, 134-137, phenylalanine 141, and arginine 144 contribute to the 4-CDP-2-C-methyl-D-erythritol 2-phosphate site; these read DIG, FPDTD, AQVPKMA, and TTTE.

It belongs to the IspF family. Homotrimer. Requires a divalent metal cation as cofactor.

The catalysed reaction is 4-CDP-2-C-methyl-D-erythritol 2-phosphate = 2-C-methyl-D-erythritol 2,4-cyclic diphosphate + CMP. Its pathway is isoprenoid biosynthesis; isopentenyl diphosphate biosynthesis via DXP pathway; isopentenyl diphosphate from 1-deoxy-D-xylulose 5-phosphate: step 4/6. Involved in the biosynthesis of isopentenyl diphosphate (IPP) and dimethylallyl diphosphate (DMAPP), two major building blocks of isoprenoid compounds. Catalyzes the conversion of 4-diphosphocytidyl-2-C-methyl-D-erythritol 2-phosphate (CDP-ME2P) to 2-C-methyl-D-erythritol 2,4-cyclodiphosphate (ME-CPP) with a corresponding release of cytidine 5-monophosphate (CMP). The chain is 2-C-methyl-D-erythritol 2,4-cyclodiphosphate synthase from Shewanella woodyi (strain ATCC 51908 / MS32).